Reading from the N-terminus, the 53-residue chain is Light-harvesting protein B-800/850 alpha chain (53 aa).

The Cytoplasmic segment spans residues 1–14 (MNQGKIWTVVNPSV). A helical membrane pass occupies residues 15-35 (GLPLLLGSVTVIAILVHAAVL). H31 provides a ligand contact to a bacteriochlorophyll. Residues 36 to 53 (SHTTWFPAYWQGGLKKAA) lie on the Periplasmic side of the membrane.

Belongs to the antenna complex alpha subunit family. As to quaternary structure, the core complex is formed by different alpha and beta chains, binding bacteriochlorophyll molecules, and arranged most probably in tetrameric structures disposed around the reaction center. The non-pigmented gamma chains may constitute additional components.

The protein resides in the cell inner membrane. Antenna complexes are light-harvesting systems, which transfer the excitation energy to the reaction centers. This is Light-harvesting protein B-800/850 alpha chain from Rhodoblastus acidophilus (Rhodopseudomonas acidophila).